We begin with the raw amino-acid sequence, 964 residues long: Pumilio homolog 3 (964 aa).

The segment at 1 to 22 (MMIPELGRRPMHRGNEDSSFGD) is disordered. Ser192 is subject to Phosphoserine. Disordered stretches follow at residues 204–235 (PVVQQPSRPASRNTFDENVDSNNNLSPSASQG), 256–300 (GTPD…TSGL), and 343–388 (DGHN…VANP). Composition is skewed to polar residues over residues 207–216 (QQPSRPASRN) and 223–234 (DSNNNLSPSASQ). Residue Thr257 is modified to Phosphothreonine. Composition is skewed to polar residues over residues 287–300 (TSNQSPFNGVTSGL) and 356–384 (RSDQARGTASCRNSQMRGSQGSAYNSGSG). Positions 606–946 (FGSSMLEEFK…HIVARVEKLV (341 aa)) constitute a PUM-HD domain. Pumilio repeat units follow at residues 626–661 (EIAGHVVEFSSDQYGSRFIQQKLETATTDEKNMVYE), 662–697 (EIMPKALALMTDVFGNYVIQKFFEHGLPPQRRELGE), 698–733 (KLIDNVLPLSLQMYGCRVIQKAIEVVDLDQKIQMVK), 734–769 (ELDGHVMRCVRDQNGNHVVQKCIECVPEENIEFIIS), 770–806 (TFFGHVVTLSTHPYGCRVIQRVLEHCHNPDTQSKVME), 807–842 (EILSTVSMLTQDQYGNYVVQHVLEHGKPDERTVIIK), 843–878 (ELAGKIVQMSQQKFASNVVEKCLTFGGPEERELLVN), and 879–920 (EMLG…LILT).

The protein resides in the cytoplasm. Its function is as follows. Sequence-specific RNA-binding protein that regulates translation and mRNA stability by binding the 3'-UTR of target mRNAs. Binds the APUM-binding elements (APBEs) in the 3'-UTR mRNA sequence of CLV1, PNH, WUS and FAS2. In Arabidopsis thaliana (Mouse-ear cress), this protein is Pumilio homolog 3 (APUM3).